The sequence spans 31 residues: Cytochrome b6-f complex subunit 6 (31 aa).

A helical membrane pass occupies residues 4-24 (VISYFGFLLVALAFTLVTYLG).

This sequence belongs to the PetL family. As to quaternary structure, the 4 large subunits of the cytochrome b6-f complex are cytochrome b6, subunit IV (17 kDa polypeptide, PetD), cytochrome f and the Rieske protein, while the 4 small subunits are PetG, PetL, PetM and PetN. The complex functions as a dimer.

The protein resides in the plastid. It localises to the chloroplast thylakoid membrane. Functionally, component of the cytochrome b6-f complex, which mediates electron transfer between photosystem II (PSII) and photosystem I (PSI), cyclic electron flow around PSI, and state transitions. PetL is important for photoautotrophic growth as well as for electron transfer efficiency and stability of the cytochrome b6-f complex. The protein is Cytochrome b6-f complex subunit 6 of Nephroselmis olivacea (Green alga).